A 137-amino-acid polypeptide reads, in one-letter code: Leaf-specific thionin (137 aa).

The signal sequence occupies residues 1-28; the sequence is MATNKSIKSVVICVLILGLVLEQVQVEA. Disulfide bonds link Cys31–Cys68, Cys32–Cys60, Cys40–Cys58, and Cys44–Cys54. The propeptide at 75 to 137 is acidic domain; sequence LNLLPESGEP…DGEVIQSVEA (63 aa).

It belongs to the plant thionin (TC 1.C.44) family. 4 C-C subfamily.

The protein resides in the secreted. Thionins are small plant proteins which are toxic to animal cells. They seem to exert their toxic effect at the level of the cell membrane. Their precise function is not known. The protein is Leaf-specific thionin (THI1.5) of Hordeum vulgare (Barley).